Reading from the N-terminus, the 112-residue chain is uncharacterized protein (112 aa).

Positions 1–27 are disordered; sequence MIASIGDSAEPPLRRTRRAQQQDRPPT.

This is an uncharacterized protein from Orgyia pseudotsugata multicapsid polyhedrosis virus (OpMNPV).